The primary structure comprises 410 residues: uncharacterized protein (410 aa).

His-87 provides a ligand contact to Zn(2+). Asp-89 is a catalytic residue. Asp-120 is a Zn(2+) binding site. The active-site Proton acceptor is Glu-154. Zn(2+) contacts are provided by Glu-155, Asp-184, and His-387.

This sequence belongs to the peptidase M20A family. Zn(2+) serves as cofactor. The cofactor is Co(2+).

This is an uncharacterized protein from Methanocaldococcus jannaschii (strain ATCC 43067 / DSM 2661 / JAL-1 / JCM 10045 / NBRC 100440) (Methanococcus jannaschii).